A 237-amino-acid chain; its full sequence is UDP-2,3-diacylglucosamine hydrolase (237 aa).

Aspartate 8, histidine 10, aspartate 41, asparagine 78, and histidine 113 together coordinate Mn(2+). A substrate-binding site is contributed by 78–79 (NR). Residues aspartate 121, serine 159, glutamine 164, and histidine 195 each contribute to the substrate site. The Mn(2+) site is built by histidine 195 and histidine 197.

Belongs to the LpxH family. Mn(2+) serves as cofactor.

Its subcellular location is the cell inner membrane. The catalysed reaction is UDP-2-N,3-O-bis[(3R)-3-hydroxytetradecanoyl]-alpha-D-glucosamine + H2O = 2-N,3-O-bis[(3R)-3-hydroxytetradecanoyl]-alpha-D-glucosaminyl 1-phosphate + UMP + 2 H(+). The protein operates within glycolipid biosynthesis; lipid IV(A) biosynthesis; lipid IV(A) from (3R)-3-hydroxytetradecanoyl-[acyl-carrier-protein] and UDP-N-acetyl-alpha-D-glucosamine: step 4/6. Hydrolyzes the pyrophosphate bond of UDP-2,3-diacylglucosamine to yield 2,3-diacylglucosamine 1-phosphate (lipid X) and UMP by catalyzing the attack of water at the alpha-P atom. Involved in the biosynthesis of lipid A, a phosphorylated glycolipid that anchors the lipopolysaccharide to the outer membrane of the cell. In Chromobacterium violaceum (strain ATCC 12472 / DSM 30191 / JCM 1249 / CCUG 213 / NBRC 12614 / NCIMB 9131 / NCTC 9757 / MK), this protein is UDP-2,3-diacylglucosamine hydrolase.